The sequence spans 91 residues: Transcription factor znf27 (91 aa).

The protein localises to the nucleus. Functionally, transcription factor; part of the gene cluster 27 that mediates the biosynthesis of asparasone A, a sclerotium-specific anthraquinone pigment important for sclerotial survival. Controls the expression of the non-reducing polyketide synthase (NRPKS) pks27. The chain is Transcription factor znf27 from Aspergillus flavus (strain ATCC 200026 / FGSC A1120 / IAM 13836 / NRRL 3357 / JCM 12722 / SRRC 167).